The following is a 245-amino-acid chain: 1-(5-phosphoribosyl)-5-[(5-phosphoribosylamino)methylideneamino] imidazole-4-carboxamide isomerase (245 aa).

Asp7 serves as the catalytic Proton acceptor. Asp129 acts as the Proton donor in catalysis.

This sequence belongs to the HisA/HisF family.

The protein localises to the cytoplasm. It carries out the reaction 1-(5-phospho-beta-D-ribosyl)-5-[(5-phospho-beta-D-ribosylamino)methylideneamino]imidazole-4-carboxamide = 5-[(5-phospho-1-deoxy-D-ribulos-1-ylimino)methylamino]-1-(5-phospho-beta-D-ribosyl)imidazole-4-carboxamide. The protein operates within amino-acid biosynthesis; L-histidine biosynthesis; L-histidine from 5-phospho-alpha-D-ribose 1-diphosphate: step 4/9. This chain is 1-(5-phosphoribosyl)-5-[(5-phosphoribosylamino)methylideneamino] imidazole-4-carboxamide isomerase, found in Shigella flexneri serotype 5b (strain 8401).